A 317-amino-acid polypeptide reads, in one-letter code: Curved DNA-binding protein (317 aa).

A J domain is found at 5-69 (DYYKILGVEP…QKRAEFDEIR (65 aa)).

The protein resides in the cytoplasm. Its subcellular location is the nucleoid. DNA-binding protein that preferentially recognizes a curved DNA sequence. It is probably a functional analog of DnaJ; displays overlapping activities with DnaJ, but functions under different conditions, probably acting as a molecular chaperone in an adaptive response to environmental stresses other than heat shock. Lacks autonomous chaperone activity; binds native substrates and targets them for recognition by DnaK. Its activity is inhibited by the binding of CbpM. This Pseudomonas putida (strain W619) protein is Curved DNA-binding protein.